A 327-amino-acid polypeptide reads, in one-letter code: Aldo-keto reductase FVEG_12638 (327 aa).

Asp-51 is a binding site for NADP(+). Tyr-56 serves as the catalytic Proton donor. His-122 serves as a coordination point for substrate. Residues Ser-152–Glu-153, Gly-202–Asp-212, and Glu-286–Glu-294 each bind NADP(+).

Belongs to the aldo/keto reductase family. Aldo/keto reductase 2 subfamily.

Its function is as follows. Aldo-keto reductase; part of the Fusarium detoxification of benzoxazolinone cluster 2 (FDB2) involved in the degradation of benzoxazolinones produced by the host plant. Maize, wheat, and rye produce the 2 benzoxazinone phytoanticipins 2,4-dihy-droxy-7-methoxy-1,4-benzoxazin-3-one (DIMBOA) and 2,4-dihydroxy-1,4-benzoxazin-3-one (DIBOA) that, due to their inherent instability once released, spontaneously degrade to the more stable corresponding benzoxazolinones, 6-methoxy-2-benzoxazolinone (MBOA) and 2-benzoxazolinone (BOA), respectively. The first step in the detoxification of benzoxazolinones involves the hydrolysis of the cyclic ester bond of benzoxazolinones by the FDB1 cluster gamma-lactamase MBL1 to aminophenols. MBL1 is able to convert BOA into 2-aminophenol (2-AP), as well as MBOA into 5-methoxy-2-aminophenol (2-AMP). The FDB2 cluster N-malonyltransferase FDB2/NAT1 then metabolizes aminophenols via N-malonylation to non-toxic malonamic acids. FDB2/NAT1 converts 2-AP into N-(2-hydroxyphenyl) malonamic acid (HPMA) and 2-AMP into N-(2-hydroxy-4-methoxyphenyl) malonamic acid (HMPMA). The duplicated dienlactone hydrolases DLH1 and DLH2 may provide redundant function for hydrolyzing the lactone moiety in the BOA molecule. The roles of the amidases an other enzymes encoded by the 2 FDB clusters have not been identified so far. The sequence is that of Aldo-keto reductase FVEG_12638 from Gibberella moniliformis (strain M3125 / FGSC 7600) (Maize ear and stalk rot fungus).